The following is a 156-amino-acid chain: Endoribonuclease YbeY (156 aa).

Zn(2+) is bound by residues His117, His121, and His127.

It belongs to the endoribonuclease YbeY family. Requires Zn(2+) as cofactor.

The protein localises to the cytoplasm. Functionally, single strand-specific metallo-endoribonuclease involved in late-stage 70S ribosome quality control and in maturation of the 3' terminus of the 16S rRNA. This chain is Endoribonuclease YbeY, found in Shewanella frigidimarina (strain NCIMB 400).